The primary structure comprises 633 residues: Chaperone protein DnaK (633 aa).

Residue Thr-198 is modified to Phosphothreonine; by autocatalysis.

The protein belongs to the heat shock protein 70 family.

Functionally, acts as a chaperone. The sequence is that of Chaperone protein DnaK from Rhodopseudomonas palustris (strain HaA2).